The sequence spans 253 residues: Imidazole glycerol phosphate synthase subunit HisF (253 aa).

Active-site residues include Asp13 and Asp132.

It belongs to the HisA/HisF family. As to quaternary structure, heterodimer of HisH and HisF.

The protein localises to the cytoplasm. The enzyme catalyses 5-[(5-phospho-1-deoxy-D-ribulos-1-ylimino)methylamino]-1-(5-phospho-beta-D-ribosyl)imidazole-4-carboxamide + L-glutamine = D-erythro-1-(imidazol-4-yl)glycerol 3-phosphate + 5-amino-1-(5-phospho-beta-D-ribosyl)imidazole-4-carboxamide + L-glutamate + H(+). It participates in amino-acid biosynthesis; L-histidine biosynthesis; L-histidine from 5-phospho-alpha-D-ribose 1-diphosphate: step 5/9. IGPS catalyzes the conversion of PRFAR and glutamine to IGP, AICAR and glutamate. The HisF subunit catalyzes the cyclization activity that produces IGP and AICAR from PRFAR using the ammonia provided by the HisH subunit. The protein is Imidazole glycerol phosphate synthase subunit HisF of Aliarcobacter butzleri (strain RM4018) (Arcobacter butzleri).